The following is a 272-amino-acid chain: Cytochrome b-c1 complex subunit Rieske-1, mitochondrial (272 aa).

A mitochondrion-targeting transit peptide spans 1–60; that stretch reads MLRVAGRRLFSVSQRSSTATSFVVSRDHTLSDGGGDSSSAPRSLPSADLSSYHRSLIRGF. The tract at residues 27 to 46 is disordered; it reads DHTLSDGGGDSSSAPRSLPS. At 61 to 109 the chain is on the mitochondrial matrix side; that stretch reads SSQVLAQGNEIGFGSEVPATVEAVKTPNSKIVYDDHNHERYPPGDPSKR. Residues 110 to 132 traverse the membrane as a helical segment; the sequence is AFAYFVLSGGRFVYASVLRLLVL. Residues 133–272 are Mitochondrial intermembrane-facing; that stretch reads KLIVSMSASK…FLEENKLLIG (140 aa). In terms of domain architecture, Rieske spans 201–270; the sequence is VRVKNPEWLV…YSFLEENKLL (70 aa). [2Fe-2S] cluster is bound by residues cysteine 215, histidine 217, cysteine 234, and histidine 237. A disulfide bridge connects residues cysteine 220 and cysteine 236.

This sequence belongs to the Rieske iron-sulfur protein family. As to quaternary structure, component of the ubiquinol-cytochrome c oxidoreductase (cytochrome b-c1 complex, complex III, CIII), a multisubunit enzyme composed of 10 subunits. The complex is composed of 3 respiratory subunits cytochrome b (MT-CYB), cytochrome c1 (CYC1-1 or CYC1-2) and Rieske protein (UCR1-1 or UCR1-2), 2 core protein subunits MPPalpha1 (or MPPalpha2) and MPPB, and 5 low-molecular weight protein subunits QCR7-1 (or QCR7-2), UCRQ-1 (or UCRQ-2), QCR9, UCRY and probably QCR6-1 (or QCR6-2). The complex exists as an obligatory dimer and forms supercomplexes (SCs) in the inner mitochondrial membrane with NADH-ubiquinone oxidoreductase (complex I, CI), resulting in different assemblies (supercomplexes SCI(1)III(2) and SCI(2)III(4)). The cofactor is [2Fe-2S] cluster.

The protein localises to the mitochondrion inner membrane. It catalyses the reaction a quinol + 2 Fe(III)-[cytochrome c](out) = a quinone + 2 Fe(II)-[cytochrome c](out) + 2 H(+)(out). Component of the ubiquinol-cytochrome c oxidoreductase, a multisubunit transmembrane complex that is part of the mitochondrial electron transport chain which drives oxidative phosphorylation. The respiratory chain contains 3 multisubunit complexes succinate dehydrogenase (complex II, CII), ubiquinol-cytochrome c oxidoreductase (cytochrome b-c1 complex, complex III, CIII) and cytochrome c oxidase (complex IV, CIV), that cooperate to transfer electrons derived from NADH and succinate to molecular oxygen, creating an electrochemical gradient over the inner membrane that drives transmembrane transport and the ATP synthase. The cytochrome b-c1 complex catalyzes electron transfer from ubiquinol to cytochrome c, linking this redox reaction to translocation of protons across the mitochondrial inner membrane, with protons being carried across the membrane as hydrogens on the quinol. In the process called Q cycle, 2 protons are consumed from the matrix, 4 protons are released into the intermembrane space and 2 electrons are passed to cytochrome c. The Rieske protein is a catalytic core subunit containing a [2Fe-2S] iron-sulfur cluster. It cycles between 2 conformational states during catalysis to transfer electrons from the quinol bound in the Q(0) site in cytochrome b to cytochrome c1. This Arabidopsis thaliana (Mouse-ear cress) protein is Cytochrome b-c1 complex subunit Rieske-1, mitochondrial.